A 188-amino-acid chain; its full sequence is Elongation factor P (188 aa).

It belongs to the elongation factor P family.

Its subcellular location is the cytoplasm. It participates in protein biosynthesis; polypeptide chain elongation. Functionally, involved in peptide bond synthesis. Stimulates efficient translation and peptide-bond synthesis on native or reconstituted 70S ribosomes in vitro. Probably functions indirectly by altering the affinity of the ribosome for aminoacyl-tRNA, thus increasing their reactivity as acceptors for peptidyl transferase. This is Elongation factor P from Methylobacterium radiotolerans (strain ATCC 27329 / DSM 1819 / JCM 2831 / NBRC 15690 / NCIMB 10815 / 0-1).